The primary structure comprises 531 residues: Unconventional prefoldin RPB5 interactor (531 aa).

Met-1 carries the post-translational modification N-acetylmethionine. Disordered regions lie at residues 1–24 (MEPP…APLR), 224–381 (ELES…ELPA), 408–470 (KSRS…SGVS), and 500–531 (TIPE…QQRS). Residues 13-24 (PLAEASAAAPLR) are compositionally biased toward low complexity. Polar residues-rich tracts occupy residues 257–266 (SPVTDSSAAS) and 280–296 (GQVN…NSYH). Residues 300 to 319 (DDDEEEEDDDDDDDEDDDNE) show a composition bias toward acidic residues. At Ser-369 the chain carries Phosphoserine; by RPS6KB1. Residues 414–424 (NSVCSDTSESS) are compositionally biased toward polar residues. Ser-439 bears the Phosphoserine mark.

The protein belongs to the RNA polymerase II subunit 5-mediating protein family. As to quaternary structure, homodimer. Component of the PAQosome complex which is responsible for the biogenesis of several protein complexes and which consists of R2TP complex members RUVBL1, RUVBL2, RPAP3 and PIH1D1, URI complex members PFDN2, PFDN6, PDRG1, UXT and URI1 as well as ASDURF, POLR2E and DNAAF10/WDR92. Interacts with POLR2E/RPB5, RUVBL2 and RUVBL1. Interacts with PFDN2, PFDN4 and STAP1; the interactions are phosphorylation-dependent and occur in a growth-dependent manner in the mitochondrion. Interacts with UXT. Interacts with PPP1CC; the interaction is phosphorylation-dependent and occurs in a growth factor-dependent manner. Interacts (via the middle C-terminal region) with GTF2F1 and GTF2F2. Interacts with DMAP1. Interacts with TSC1 and TSC2. Interacts with PRPF8 and EFTUD2 in a ZNHIT2-dependent manner. In terms of processing, phosphorylation occurs in response to androgen treatment in prostate cancer cells in a mTOR-dependent manner. Phosphorylated; hyperhosphorylated in mitochondria in a mTORC-dependent signaling pathway. Phosphorylated at Ser-369 by RPS6KB1 in a growth factor- and rapamycin-dependent manner. S6K1-mediated mitochondrial phosphorylation at Ser-369 disrupts the URI1-PPP1CC complex in the mitochondrion, relieves PPP1CC phosphatase inhibition activity and hence engages a negative feedback diminishing RPS6KB1 kinase activity, preventing sustained S6K1-dependent signaling. Phosphorylated. Phosphorylation occurs essentially on serine residues. Expressed in the spinal cord, ganglia, choroid plexus and olfactors epithelium of the developing brain. Expressed in skin, lung, kidney, testis and muscles (at protein level). Expressed strongly in brain and kidney. Expressed weakly in skeletal muscle, lung and liver.

The protein resides in the nucleus. Its subcellular location is the cytoplasm. It is found in the mitochondrion. It localises to the cell projection. The protein localises to the dendrite. Involved in gene transcription regulation. Acts as a transcriptional repressor in concert with the corepressor UXT to regulate androgen receptor (AR) transcription. May act as a tumor suppressor to repress AR-mediated gene transcription and to inhibit anchorage-independent growth in prostate cancer cells. Required for cell survival in ovarian cancer cells. Together with UXT, associates with chromatin to the NKX3-1 promoter region. Its function is as follows. Plays a central role in maintaining S6K1 signaling and BAD phosphorylation under normal growth conditions thereby protecting cells from potential deleterious effects of sustained S6K1 signaling. The URI1-PPP1CC complex acts as a central component of a negative feedback mechanism that counteracts excessive S6K1 survival signaling to BAD in response to growth factors. Mediates inhibition of PPP1CC phosphatase activity in mitochondria. Coordinates the regulation of nutrient-sensitive gene expression availability in a mTOR-dependent manner. Seems to be a scaffolding protein able to assemble a prefoldin-like complex that contains PFDs and proteins with roles in transcription and ubiquitination. The sequence is that of Unconventional prefoldin RPB5 interactor (Uri1) from Mus musculus (Mouse).